A 64-amino-acid polypeptide reads, in one-letter code: Large ribosomal subunit protein bL33c (64 aa).

The protein belongs to the bacterial ribosomal protein bL33 family.

It is found in the plastid. Its subcellular location is the organellar chromatophore. This is Large ribosomal subunit protein bL33c from Paulinella chromatophora.